The primary structure comprises 286 residues: 33 kDa chaperonin (286 aa).

Disulfide bonds link cysteine 225–cysteine 227 and cysteine 258–cysteine 261.

Belongs to the HSP33 family. Under oxidizing conditions two disulfide bonds are formed involving the reactive cysteines. Under reducing conditions zinc is bound to the reactive cysteines and the protein is inactive.

It is found in the cytoplasm. In terms of biological role, redox regulated molecular chaperone. Protects both thermally unfolding and oxidatively damaged proteins from irreversible aggregation. Plays an important role in the bacterial defense system toward oxidative stress. The chain is 33 kDa chaperonin from Shewanella oneidensis (strain ATCC 700550 / JCM 31522 / CIP 106686 / LMG 19005 / NCIMB 14063 / MR-1).